We begin with the raw amino-acid sequence, 157 residues long: Small ribosomal subunit protein uS7 (157 aa).

It belongs to the universal ribosomal protein uS7 family. In terms of assembly, part of the 30S ribosomal subunit. Contacts proteins S9 and S11.

Its function is as follows. One of the primary rRNA binding proteins, it binds directly to 16S rRNA where it nucleates assembly of the head domain of the 30S subunit. Is located at the subunit interface close to the decoding center, probably blocks exit of the E-site tRNA. In Albidiferax ferrireducens (strain ATCC BAA-621 / DSM 15236 / T118) (Rhodoferax ferrireducens), this protein is Small ribosomal subunit protein uS7.